The following is a 302-amino-acid chain: Putative S-adenosyl-L-methionine-dependent methyltransferase MMAR_1068 (302 aa).

Residues Asp-127 and 156-157 (DL) each bind S-adenosyl-L-methionine.

This sequence belongs to the UPF0677 family.

In terms of biological role, exhibits S-adenosyl-L-methionine-dependent methyltransferase activity. The chain is Putative S-adenosyl-L-methionine-dependent methyltransferase MMAR_1068 from Mycobacterium marinum (strain ATCC BAA-535 / M).